The primary structure comprises 489 residues: Ammonium transporter Rh type C (489 aa).

Over 1–21 (MGNCADCLRGFFCPPKNTNIR) the chain is Cytoplasmic. A helical transmembrane segment spans residues 22–42 (ISLPAVCFVWQIAMIVLFGVF). The Extracellular segment spans residues 43 to 75 (IRYDAESDIRLWLQLKHTNNITSDIENDFYFRY). N-linked (GlcNAc...) asparagine glycosylation occurs at asparagine 62. The helical transmembrane segment at 76–96 (PSFQDVHVMIFVGFGFLMTFL) threads the bilayer. Over 97–100 (KRYS) the chain is Cytoplasmic. Residues 101-121 (FGGVGFNFLIGAFGLQWALLM) form a helical membrane-spanning segment. Topologically, residues 122–140 (QGWFHALDPTTGKISIGVE) are extracellular. The chain crosses the membrane as a helical span at residues 141–161 (GLINADFCVAASLIAYGALLG). Residues 162 to 169 (KVSPVQLM) are Cytoplasmic-facing. Residues 170-190 (VVTLFGVTLFAVEEYIILNLL) form a helical membrane-spanning segment. At 191-195 (HCRDA) the chain is on the extracellular side. A helical membrane pass occupies residues 196–216 (GGSMVIHCFGGYYGLTISWIL). The Cytoplasmic segment spans residues 217–235 (YRPKLHQSKRLNGSVYHSD). The chain crosses the membrane as a helical span at residues 236-256 (VFAMIGTLFLWMFWPSFNSAI). Residues 257–266 (TDHGSGQHRT) are Extracellular-facing. A helical membrane pass occupies residues 267 to 287 (AINTYIALASSVLTTVAISSA). At 288–298 (SEKRGKLDMVH) the chain is on the cytoplasmic side. The chain crosses the membrane as a helical span at residues 299–319 (IQNATLAGGVAMGTAAEFMIT). Proline 320 is a topological domain (extracellular). Residues 321-341 (YGALIVGFCTGIISTFGYLFV) traverse the membrane as a helical segment. Residues 342 to 359 (SPFMEKYLKIQDTCGVHN) are Cytoplasmic-facing. The helical transmembrane segment at 360–380 (LHAMPGMLGGFIGAIVAAAAT) threads the bilayer. The Extracellular segment spans residues 381-412 (EEVYSREGLIETFDFEGKFADRTVGTQGGFQA). Residues 413–433 (AGVCVAIAFAVVGGAVVGLIL) traverse the membrane as a helical segment. At 434–489 (RLPIWGDPADDNCFDDEVYWEVPEDEEGILPVLEYNNHMTHKHQDISESNFSVEQS) the chain is on the cytoplasmic side.

The protein belongs to the ammonium transporter (TC 2.A.49) family. Rh subfamily. Homotrimer.

It is found in the apical cell membrane. Functions as an ammonia transporter. May play a role in the elimination of ammonia in the gill. This Gasterosteus aculeatus (Three-spined stickleback) protein is Ammonium transporter Rh type C (rhcg).